A 753-amino-acid chain; its full sequence is Serine/threonine-protein phosphatase with EF-hands 2 (753 aa).

An IQ domain is found at 21–46 (KAAALIQRWYRRYVARLEMRRRCTWS). The interval 128–540 (ATALVEAFRL…PHIVQYQANK (413 aa)) is catalytic. Mn(2+)-binding residues include Asp179, His181, Asp208, and Asn240. Catalysis depends on His241, which acts as the Proton donor. His292 provides a ligand contact to Mn(2+). Disordered regions lie at residues 318 to 382 (CKTR…GSLD) and 409 to 435 (VTGEKEEPSRSASEADSEAGELRKPTQ). The span at 322-333 (QKSEKQMEEKRR) shows a compositional bias: basic and acidic residues. Residues 348–361 (LPESRSLPSSPLRL) are compositionally biased toward low complexity. The segment covering 366 to 377 (AQKTSRSSSIPC) has biased composition (polar residues). Residue His488 participates in Mn(2+) binding. 3 EF-hand domains span residues 568–603 (AHSSDLLSEFKKHDADKVGLITLSDWAAAVESVLHL), 652–687 (RNRSNLETIFRIIDSDHSGFISLDEFRQTWKLFSSH), and 692–727 (ITDDCICDLARSIDFNKDGHIDINEFLEAFRLVEKS). The Ca(2+) site is built by Asp665, Asp667, Ser669, Glu676, Asp705, Asn707, Asp709, His711, and Glu716. The interval 732-753 (DASECPQATNAKDSGCSSPGAH) is disordered. The segment covering 737–753 (PQATNAKDSGCSSPGAH) has biased composition (polar residues).

It belongs to the PPP phosphatase family. Mn(2+) is required as a cofactor. As to expression, retinal specific.

The protein localises to the cytoplasm. The protein resides in the cell projection. It localises to the cilium. It is found in the photoreceptor outer segment. Its subcellular location is the photoreceptor inner segment. It carries out the reaction O-phospho-L-seryl-[protein] + H2O = L-seryl-[protein] + phosphate. It catalyses the reaction O-phospho-L-threonyl-[protein] + H2O = L-threonyl-[protein] + phosphate. Its activity is regulated as follows. Activated by calcium. May play a role in phototransduction. May dephosphorylate photoactivated rhodopsin. May function as a calcium sensing regulator of ionic currents, energy production or synaptic transmission. The polypeptide is Serine/threonine-protein phosphatase with EF-hands 2 (PPEF2) (Homo sapiens (Human)).